The sequence spans 259 residues: Polycomb group RING finger protein 1 (259 aa).

Ala-2 is subject to N-acetylalanine. Ser-3 is subject to Phosphoserine. Lys-24 is covalently cross-linked (Glycyl lysine isopeptide (Lys-Gly) (interchain with G-Cter in SUMO2)). The RING-type zinc finger occupies 47–86; it reads CCLCAGYFVDATTITECLHTFCKSCIVKYLQTSKYCPMCN. Positions 86–247 are necessary for repressor activity; the sequence is NIKIHETQPL…LSRWFGKPSP (162 aa). Lys-88 is covalently cross-linked (Glycyl lysine isopeptide (Lys-Gly) (interchain with G-Cter in SUMO2)). A required for the interaction with the KDM2B-SKP1 heterodimeric complex region spans residues 150-255; sequence LPFSSFDHSK…SPLLLQYSVK (106 aa). Residues 167-255 form an RING-finger and WD40-associated ubiquitin-like domain (RAWUL); sufficient for interaction with BCOR and BCORL1 region; it reads EQLSLCLERL…SPLLLQYSVK (89 aa).

As to quaternary structure, interacts with BCORL1, forming heterodimers. The PCGF1-BCORL1 heterodimeric complex interacts with the KDM2B-SKP1 heterodimeric complex to form a homotetrameric polycomb repression complex 1 (PRC1.1). Component of the repressive BCOR complex containing a Polycomb group subcomplex at least composed of RYBP, RING1 and RNF2/RING2. Specifically interacts with BCOR, RING1 and RNF2/RING2. Component of a PRC1-like complex. Interacts with CBX6, CBX7 and CBX8. Interacts with DPPA4, NANOG, POU5F1 and RYBP.

The protein localises to the nucleus. Functionally, component of the Polycomb group (PcG) multiprotein BCOR complex, a complex required to maintain the transcriptionally repressive state of some genes, such as BCL6 and the cyclin-dependent kinase inhibitor, CDKN1A. Transcriptional repressor that may be targeted to the DNA by BCL6; this transcription repressor activity may be related to PKC signaling pathway. Represses CDKN1A expression by binding to its promoter, and this repression is dependent on the retinoic acid response element (RARE element). Promotes cell cycle progression and enhances cell proliferation as well. May have a positive role in tumor cell growth by down-regulating CDKN1A. Component of a Polycomb group (PcG) multiprotein PRC1-like complex, a complex class required to maintain the transcriptionally repressive state of many genes, including Hox genes, throughout development. PcG PRC1 complex acts via chromatin remodeling and modification of histones; it mediates monoubiquitination of histone H2A 'Lys-119', rendering chromatin heritably changed in its expressibility. Within the PRC1-like complex, regulates RNF2 ubiquitin ligase activity. Regulates the expression of DPPA4 and NANOG in the NT2 embryonic carcinoma cells. The sequence is that of Polycomb group RING finger protein 1 (Pcgf1) from Mus musculus (Mouse).